Consider the following 476-residue polypeptide: Probable rhodanese domain-containing dual specificity protein phosphatase (476 aa).

The Rhodanese domain maps to 32–190; it reads IGSSKIIIDL…FQKDYSFMCN (159 aa). Positions 208–350 constitute a Tyrosine-protein phosphatase domain; that stretch reads YPSEIIKDFL…LKDYQQHLTL (143 aa). The active-site Phosphocysteine intermediate is C294. A compositionally biased stretch (low complexity) spans 425-436; sequence KTTTSSTTINNK. Positions 425 to 476 are disordered; it reads KTTTSSTTINNKGQQQDKAQEEKDSIFSYADKQEKMTHPTLHSPIELPQSSL. Residues 442-461 are compositionally biased toward basic and acidic residues; sequence KAQEEKDSIFSYADKQEKMT.

The protein belongs to the protein-tyrosine phosphatase family. Non-receptor class dual specificity subfamily.

The catalysed reaction is O-phospho-L-tyrosyl-[protein] + H2O = L-tyrosyl-[protein] + phosphate. The enzyme catalyses O-phospho-L-seryl-[protein] + H2O = L-seryl-[protein] + phosphate. It catalyses the reaction O-phospho-L-threonyl-[protein] + H2O = L-threonyl-[protein] + phosphate. Its function is as follows. Has a dual specificity toward Ser/Thr and Tyr-containing proteins. This Dictyostelium discoideum (Social amoeba) protein is Probable rhodanese domain-containing dual specificity protein phosphatase.